A 524-amino-acid polypeptide reads, in one-letter code: MTDKSNNPAPASDPSTTETSNDADGSDGQLDAETDPGTSTGPSDLDDVILDNLDAGSDDPSDEASRGLFDDLLEGEPIFENKEVLRPSYTPHKLPHREEQINNMATILVTALRGDTPSNILIYGKTGTGKTASAKFVSEELETTSQKYEVPCEVEYINCEVTDTQYRVLAQLANKFIDKNAQLIDDRIAELEELQSQARENTAALEETAFGSLDDVEAEIESLEADKSEFEEVPMTGWPTDRVYSSFFDAVDYHERVVVIMLDEIDKLVEKSGDDTLYNLSRMNSELENSRVSIMGISNDLKFTDFLDPRVKSSLGEEEIVFPPYDANQLRDILQARSDVAFKGDALTEDVIPLCAAFAAQEHGDARRALDLLRTAGELAERDQTDNVLEDHVRQAQEKIELDRVVEVVRTLPTQSKIVLFAIILLEKNGVHNINTGEVFNIYKNLCEEIDADILTQRRVTDLISELDMLGIVNAVVVSKGRYGRTKEISLSVPTEETEAVLLSDSRLGDIDDVQPFVQARFDN.

Polar residues predominate over residues 1–23 (MTDKSNNPAPASDPSTTETSNDA). The disordered stretch occupies residues 1–67 (MTDKSNNPAP…DDPSDEASRG (67 aa)). Residues 128-132 (TGKTA), Tyr325, and Arg337 each bind ATP.

This sequence belongs to the CDC6/cdc18 family.

Functionally, involved in regulation of DNA replication. The protein is ORC1-type DNA replication protein 4 (cdc6d) of Haloarcula marismortui (strain ATCC 43049 / DSM 3752 / JCM 8966 / VKM B-1809) (Halobacterium marismortui).